The primary structure comprises 156 residues: ATP synthase subunit b (156 aa).

Residues 7–27 (FFAQMVVFFILWWVVAKFIWP) form a helical membrane-spanning segment.

It belongs to the ATPase B chain family. F-type ATPases have 2 components, F(1) - the catalytic core - and F(0) - the membrane proton channel. F(1) has five subunits: alpha(3), beta(3), gamma(1), delta(1), epsilon(1). F(0) has three main subunits: a(1), b(2) and c(10-14). The alpha and beta chains form an alternating ring which encloses part of the gamma chain. F(1) is attached to F(0) by a central stalk formed by the gamma and epsilon chains, while a peripheral stalk is formed by the delta and b chains.

It is found in the cell inner membrane. F(1)F(0) ATP synthase produces ATP from ADP in the presence of a proton or sodium gradient. F-type ATPases consist of two structural domains, F(1) containing the extramembraneous catalytic core and F(0) containing the membrane proton channel, linked together by a central stalk and a peripheral stalk. During catalysis, ATP synthesis in the catalytic domain of F(1) is coupled via a rotary mechanism of the central stalk subunits to proton translocation. In terms of biological role, component of the F(0) channel, it forms part of the peripheral stalk, linking F(1) to F(0). The sequence is that of ATP synthase subunit b from Cupriavidus metallidurans (strain ATCC 43123 / DSM 2839 / NBRC 102507 / CH34) (Ralstonia metallidurans).